A 196-amino-acid chain; its full sequence is Adenylyl-sulfate kinase (196 aa).

Residue G31 to S38 participates in ATP binding. Residue S105 is the Phosphoserine intermediate of the active site.

It belongs to the APS kinase family.

It catalyses the reaction adenosine 5'-phosphosulfate + ATP = 3'-phosphoadenylyl sulfate + ADP + H(+). Its pathway is sulfur metabolism; hydrogen sulfide biosynthesis; sulfite from sulfate: step 2/3. Functionally, catalyzes the synthesis of activated sulfate. This is Adenylyl-sulfate kinase (cysC) from Pseudomonas aeruginosa (strain ATCC 15692 / DSM 22644 / CIP 104116 / JCM 14847 / LMG 12228 / 1C / PRS 101 / PAO1).